We begin with the raw amino-acid sequence, 390 residues long: Galactokinase (390 aa).

A substrate-binding site is contributed by glutamate 33–aspartate 36. Residues serine 67 and glycine 124–serine 130 contribute to the ATP site. The Mg(2+) site is built by serine 130 and glutamate 162. Residue aspartate 174 is the Proton acceptor of the active site. Residue tyrosine 224 coordinates substrate.

It belongs to the GHMP kinase family. GalK subfamily.

It localises to the cytoplasm. The catalysed reaction is alpha-D-galactose + ATP = alpha-D-galactose 1-phosphate + ADP + H(+). The protein operates within carbohydrate metabolism; galactose metabolism. Its function is as follows. Catalyzes the transfer of the gamma-phosphate of ATP to D-galactose to form alpha-D-galactose-1-phosphate (Gal-1-P). The chain is Galactokinase from Exiguobacterium sibiricum (strain DSM 17290 / CCUG 55495 / CIP 109462 / JCM 13490 / 255-15).